A 351-amino-acid polypeptide reads, in one-letter code: Probable aldo-keto reductase 2 (351 aa).

Y67 serves as the catalytic Proton donor. H134 lines the substrate pocket. 213–223 (SPLGRGFFSAG) contacts NADP(+). The interval 317–351 (YASTDDVRGDRYPQAMANTTWQNSETPPLSSWKAQ) is disordered. A compositionally biased stretch (polar residues) spans 332–351 (MANTTWQNSETPPLSSWKAQ).

It belongs to the aldo/keto reductase family.

This Oryza sativa subsp. indica (Rice) protein is Probable aldo-keto reductase 2.